Consider the following 81-residue polypeptide: MGCDDKCGCAVPCPGGTGCRCTSARSGAAAGEHTTCGCGEHCGCNPCACGREGTPSGRANRRANCSCGAACNCASCGSATA.

Belongs to the metallothionein superfamily. Type 15 family.

Its function is as follows. Binds 5 molecules of zinc. May have a role in Zn(2+) homeostasis during embryogenesis. In Triticum aestivum (Wheat), this protein is EC protein I/II.